The sequence spans 827 residues: Leucine--tRNA ligase (827 aa).

Residues 42-52 carry the 'HIGH' region motif; that stretch reads PYPSGKLHMGH. Residues 581–585 carry the 'KMSKS' region motif; sequence KMSKS. ATP is bound at residue K584.

It belongs to the class-I aminoacyl-tRNA synthetase family.

The protein resides in the cytoplasm. The enzyme catalyses tRNA(Leu) + L-leucine + ATP = L-leucyl-tRNA(Leu) + AMP + diphosphate. The protein is Leucine--tRNA ligase of Desulforamulus reducens (strain ATCC BAA-1160 / DSM 100696 / MI-1) (Desulfotomaculum reducens).